An 879-amino-acid polypeptide reads, in one-letter code: Protein P (879 aa).

The tract at residues 1–184 is terminal protein domain (TP); the sequence is MHPFSRLFRN…GKPYSWEHRQ (184 aa). A spacer region spans residues 185–382; sequence LVQHNGQQHK…YCIHHIVSSI (198 aa). Residues 304–345 are disordered; the sequence is SASNSNKSRSREKAYSSNSTSKRYSPPLNYEKSDFSSPGVRG. The tract at residues 383-724 is polymerase/reverse transcriptase domain (RT); it reads DDWGPCTVTG…YEELWPVVRQ (342 aa). A Reverse transcriptase domain is found at 393 to 634; the sequence is DVTIKSPRTP…NHLHFMGYVI (242 aa). Mg(2+)-binding residues include aspartate 465, aspartate 585, and aspartate 586.

It belongs to the hepadnaviridae P protein family.

It catalyses the reaction DNA(n) + a 2'-deoxyribonucleoside 5'-triphosphate = DNA(n+1) + diphosphate. It carries out the reaction Endonucleolytic cleavage to 5'-phosphomonoester.. With respect to regulation, activated by host HSP70 and HSP40 in vitro to be able to bind the epsilon loop of the pgRNA. Because deletion of the RNase H region renders the protein partly chaperone-independent, the chaperones may be needed indirectly to relieve occlusion of the RNA-binding site by this domain. Inhibited by several reverse-transcriptase inhibitors: Lamivudine, Adefovir and Entecavir. Functionally, multifunctional enzyme that converts the viral RNA genome into dsDNA in viral cytoplasmic capsids. This enzyme displays a DNA polymerase activity that can copy either DNA or RNA templates, and a ribonuclease H (RNase H) activity that cleaves the RNA strand of RNA-DNA heteroduplexes in a partially processive 3'- to 5'-endonucleasic mode. Neo-synthesized pregenomic RNA (pgRNA) are encapsidated together with the P protein, and reverse-transcribed inside the nucleocapsid. Initiation of reverse-transcription occurs first by binding the epsilon loop on the pgRNA genome, and is initiated by protein priming, thereby the 5'-end of (-)DNA is covalently linked to P protein. Partial (+)DNA is synthesized from the (-)DNA template and generates the relaxed circular DNA (RC-DNA) genome. After budding and infection, the RC-DNA migrates in the nucleus, and is converted into a plasmid-like covalently closed circular DNA (cccDNA). The activity of P protein does not seem to be necessary for cccDNA generation, and is presumably released from (+)DNA by host nuclear DNA repair machinery. This is Protein P from Woodchuck hepatitis B virus (isolate 1) (WHV).